We begin with the raw amino-acid sequence, 155 residues long: Small ribosomal subunit protein uS7cz/uS7cy (155 aa).

It belongs to the universal ribosomal protein uS7 family. Part of the 30S ribosomal subunit.

The protein localises to the plastid. It localises to the chloroplast. Its function is as follows. One of the primary rRNA binding proteins, it binds directly to 16S rRNA where it nucleates assembly of the head domain of the 30S subunit. The protein is Small ribosomal subunit protein uS7cz/uS7cy (rps7-A) of Angiopteris evecta (Mule's foot fern).